Reading from the N-terminus, the 96-residue chain is MNLRPLHDRVIVKRLDQETKTASGIVIPDAAAEKPDQGEVLAVGPGKRDDKGAPIALDVKVGDRVLFGKYAGQTVKVDGNELLVMREEDIMAVVNK.

Belongs to the GroES chaperonin family. In terms of assembly, heptamer of 7 subunits arranged in a ring. Interacts with the chaperonin GroEL.

It is found in the cytoplasm. Its function is as follows. Together with the chaperonin GroEL, plays an essential role in assisting protein folding. The GroEL-GroES system forms a nano-cage that allows encapsulation of the non-native substrate proteins and provides a physical environment optimized to promote and accelerate protein folding. GroES binds to the apical surface of the GroEL ring, thereby capping the opening of the GroEL channel. The polypeptide is Co-chaperonin GroES (Paraburkholderia phymatum (strain DSM 17167 / CIP 108236 / LMG 21445 / STM815) (Burkholderia phymatum)).